The sequence spans 848 residues: Xylosyltransferase (848 aa).

At 1–14 the chain is on the cytoplasmic side; it reads MSLHRTLRRFLRKW. Residues 15–35 traverse the membrane as a helical; Signal-anchor for type II membrane protein segment; sequence KALVYAVSFILLIQAFFTFQS. Residues 36–843 are Lumenal-facing; it reads SPNLMEEEHL…PKTELISVKP (808 aa). Disulfide bonds link C145/C173, C189/C427, C446/C459, and C448/C457. Residues V219, D247, and 276–278 each bind UDP-alpha-D-xylose; that span reads TIW. The N-linked (GlcNAc...) asparagine glycan is linked to N306. A UDP-alpha-D-xylose-binding site is contributed by 379 to 380; that stretch reads DW. Residues S460 and 482 to 483 each bind UDP-alpha-D-xylose; that span reads RK. Disulfide bonds link C529–C811 and C794–C822. N530 carries an N-linked (GlcNAc...) asparagine glycan. The segment at 824-848 is disordered; it reads NTNWSSLSPDPKTELISVKPDGRIR. An N-linked (GlcNAc...) asparagine glycan is attached at N826.

The protein belongs to the glycosyltransferase 14 family. XylT subfamily. A divalent metal cation is required as a cofactor.

It is found in the endoplasmic reticulum membrane. Its subcellular location is the golgi apparatus membrane. It catalyses the reaction UDP-alpha-D-xylose + L-seryl-[protein] = 3-O-(beta-D-xylosyl)-L-seryl-[protein] + UDP + H(+). Its pathway is glycan metabolism; chondroitin sulfate biosynthesis. The protein operates within glycan metabolism; heparan sulfate biosynthesis. Its function is as follows. Catalyzes the first step in biosynthesis of glycosaminoglycan. Transfers D-xylose from UDP-D-xylose to specific serine residues of the core protein. Initial enzyme in the biosynthesis of chondroitin sulfate and dermatan sulfate proteoglycans in fibroblasts and chondrocytes. This is Xylosyltransferase (xt) from Ciona intestinalis (Transparent sea squirt).